Here is a 363-residue protein sequence, read N- to C-terminus: MLGILRQRAIDGASTLRRTRFALVSARSYAAGAKEMTVRDALNSAIDEEMSADPKVFVMGEEVGQYQGAYKITKGLLEKYGPERVYDTPITEAGFTGIGVGAAYAGLKPVVEFMTFNFSMQAIDHIINSAAKSNYMSAGQINVPIVFRGPNGAAAGVGAQHSQCYAAWYASVPGLKVLAPYSAEDARGLLKAAIRDPDPVVFLENELLYGESFPISEEALDSSFCLPIGKAKIEREGKDVTIVTFSKMVGFALKAAEKLAEEGISAEVINLRSIRPLDRATINASVRKTSRLVTVEEGFPQHGVCAEICASVVEESFSYLDAPVERIAGADVPMPYAANLERLALPQIEDIVRASKRACYRSK.

Residues 1–29 constitute a mitochondrion transit peptide; the sequence is MLGILRQRAIDGASTLRRTRFALVSARSY. E92 provides a ligand contact to thiamine diphosphate. K(+) is bound by residues I145, A193, I194, and D196. Glycyl lysine isopeptide (Lys-Gly) (interchain with G-Cter in ubiquitin) cross-links involve residues K247 and K254.

Tetramer of 2 alpha and 2 beta subunits. Thiamine diphosphate serves as cofactor. In terms of tissue distribution, expressed in roots, immature rosettes, and mature rosettes.

It is found in the mitochondrion matrix. The enzyme catalyses N(6)-[(R)-lipoyl]-L-lysyl-[protein] + pyruvate + H(+) = N(6)-[(R)-S(8)-acetyldihydrolipoyl]-L-lysyl-[protein] + CO2. In terms of biological role, the pyruvate dehydrogenase complex catalyzes the overall conversion of pyruvate to acetyl-CoA and CO(2). It contains multiple copies of three enzymatic components: pyruvate dehydrogenase (E1), dihydrolipoamide acetyltransferase (E2) and lipoamide dehydrogenase (E3). This Arabidopsis thaliana (Mouse-ear cress) protein is Pyruvate dehydrogenase E1 component subunit beta-1, mitochondrial (PDH2).